The chain runs to 87 residues: Sec-independent protein translocase protein TatA (87 aa).

The helical transmembrane segment at 3–23 (IFGIGLPEMIVILVVALLIFG) threads the bilayer. A disordered region spans residues 61-87 (EGVKVSTSASEPEKVVDVSSATNTNKN).

The protein belongs to the TatA/E family. Forms a complex with TatC.

It is found in the cell inner membrane. Functionally, part of the twin-arginine translocation (Tat) system that transports large folded proteins containing a characteristic twin-arginine motif in their signal peptide across membranes. TatA could form the protein-conducting channel of the Tat system. The polypeptide is Sec-independent protein translocase protein TatA (Trichodesmium erythraeum (strain IMS101)).